The sequence spans 103 residues: Large ribosomal subunit protein bL21 (103 aa).

The protein belongs to the bacterial ribosomal protein bL21 family. In terms of assembly, part of the 50S ribosomal subunit. Contacts protein L20.

This protein binds to 23S rRNA in the presence of protein L20. The chain is Large ribosomal subunit protein bL21 from Shewanella frigidimarina (strain NCIMB 400).